The sequence spans 493 residues: Alcohol-forming fatty acyl-CoA reductase (493 aa).

The protein belongs to the fatty acyl-CoA reductase family.

It carries out the reaction a long-chain fatty acyl-CoA + 2 NADPH + 2 H(+) = a long-chain primary fatty alcohol + 2 NADP(+) + CoA. In terms of biological role, NADPH-dependent alcohol-forming fatty acyl-coenzyme A reductase that catalyzes the reduction of fatty acyl-CoA to fatty alcohols. The recombinant enzyme accepts saturated and mono-unsaturated fatty acyl-CoAs of 16 to 22 carbons. This chain is Alcohol-forming fatty acyl-CoA reductase, found in Simmondsia chinensis (Jojoba).